Here is a 200-residue protein sequence, read N- to C-terminus: Holliday junction branch migration complex subunit RuvA (200 aa).

The segment at 1–63 (MYAYIKGTLT…EDAQLLYGFI (63 aa)) is domain I. The domain II stretch occupies residues 64–142 (NQEEKDMFLS…INDVDSSQIL (79 aa)). Residues 143 to 149 (NTDTQDH) form a flexible linker region. Residues 150-200 (ANAPIIKEALLALEALGYSKRELTKVEKSLSKETFDSVDDAVKRGLQLLIA) form a domain III region.

It belongs to the RuvA family. In terms of assembly, homotetramer. Forms an RuvA(8)-RuvB(12)-Holliday junction (HJ) complex. HJ DNA is sandwiched between 2 RuvA tetramers; dsDNA enters through RuvA and exits via RuvB. An RuvB hexamer assembles on each DNA strand where it exits the tetramer. Each RuvB hexamer is contacted by two RuvA subunits (via domain III) on 2 adjacent RuvB subunits; this complex drives branch migration. In the full resolvosome a probable DNA-RuvA(4)-RuvB(12)-RuvC(2) complex forms which resolves the HJ.

Its subcellular location is the cytoplasm. Functionally, the RuvA-RuvB-RuvC complex processes Holliday junction (HJ) DNA during genetic recombination and DNA repair, while the RuvA-RuvB complex plays an important role in the rescue of blocked DNA replication forks via replication fork reversal (RFR). RuvA specifically binds to HJ cruciform DNA, conferring on it an open structure. The RuvB hexamer acts as an ATP-dependent pump, pulling dsDNA into and through the RuvAB complex. HJ branch migration allows RuvC to scan DNA until it finds its consensus sequence, where it cleaves and resolves the cruciform DNA. The chain is Holliday junction branch migration complex subunit RuvA from Staphylococcus saprophyticus subsp. saprophyticus (strain ATCC 15305 / DSM 20229 / NCIMB 8711 / NCTC 7292 / S-41).